The primary structure comprises 302 residues: NAD kinase 2 (302 aa).

Asp-78 acts as the Proton acceptor in catalysis. Residues 78-79 (DG), 152-153 (NE), Asp-182, 193-198 (TAYSLS), and Ala-217 contribute to the NAD(+) site.

Belongs to the NAD kinase family. It depends on a divalent metal cation as a cofactor.

The protein localises to the cytoplasm. It carries out the reaction NAD(+) + ATP = ADP + NADP(+) + H(+). In terms of biological role, involved in the regulation of the intracellular balance of NAD and NADP, and is a key enzyme in the biosynthesis of NADP. Catalyzes specifically the phosphorylation on 2'-hydroxyl of the adenosine moiety of NAD to yield NADP. In Prochlorococcus marinus (strain SARG / CCMP1375 / SS120), this protein is NAD kinase 2.